The sequence spans 468 residues: Dimethylamine methyltransferase MtbB1 (468 aa).

O356 is a non-standard amino acid (pyrrolysine).

It belongs to the dimethylamine methyltransferase family.

It carries out the reaction Co(I)-[dimethylamine-specific corrinoid protein] + dimethylamine + H(+) = methyl-Co(III)-[dimethylamine-specific corrinoid protein] + methylamine. The protein operates within one-carbon metabolism; methanogenesis from dimethylamine. In terms of biological role, catalyzes the transfer of a methyl group from dimethylamine to the corrinoid cofactor of MtbC. The chain is Dimethylamine methyltransferase MtbB1 (mtbB1) from Methanosarcina mazei (strain ATCC BAA-159 / DSM 3647 / Goe1 / Go1 / JCM 11833 / OCM 88) (Methanosarcina frisia).